We begin with the raw amino-acid sequence, 257 residues long: Uridylate kinase (257 aa).

An ATP-binding site is contributed by 8–11; the sequence is KLSG. Residues 21 to 26 are involved in allosteric activation by GTP; that stretch reads GSAGFG. G56 lines the UMP pocket. ATP contacts are provided by G57 and R61. Residues D75 and 136–143 contribute to the UMP site; that span reads NGAPFFTT. Residues N164, Y170, and D173 each coordinate ATP.

This sequence belongs to the UMP kinase family. In terms of assembly, homohexamer.

The protein resides in the cytoplasm. The catalysed reaction is UMP + ATP = UDP + ADP. The protein operates within pyrimidine metabolism; CTP biosynthesis via de novo pathway; UDP from UMP (UMPK route): step 1/1. With respect to regulation, allosterically activated by GTP. Inhibited by UTP. Its function is as follows. Catalyzes the reversible phosphorylation of UMP to UDP. The chain is Uridylate kinase from Deinococcus geothermalis (strain DSM 11300 / CIP 105573 / AG-3a).